We begin with the raw amino-acid sequence, 448 residues long: Glucose-6-phosphate isomerase (448 aa).

E290 functions as the Proton donor in the catalytic mechanism. Active-site residues include H311 and K425.

This sequence belongs to the GPI family.

Its subcellular location is the cytoplasm. It catalyses the reaction alpha-D-glucose 6-phosphate = beta-D-fructose 6-phosphate. It functions in the pathway carbohydrate biosynthesis; gluconeogenesis. The protein operates within carbohydrate degradation; glycolysis; D-glyceraldehyde 3-phosphate and glycerone phosphate from D-glucose: step 2/4. Its function is as follows. Catalyzes the reversible isomerization of glucose-6-phosphate to fructose-6-phosphate. In Oceanobacillus iheyensis (strain DSM 14371 / CIP 107618 / JCM 11309 / KCTC 3954 / HTE831), this protein is Glucose-6-phosphate isomerase.